The chain runs to 208 residues: A-type ATP synthase subunit E (208 aa).

Positions 37-57 (DAEKTAEAEKNKILDNGKKQS) are disordered.

It belongs to the V-ATPase E subunit family. As to quaternary structure, has multiple subunits with at least A(3), B(3), C, D, E, F, H, I and proteolipid K(x).

The protein resides in the cell membrane. Component of the A-type ATP synthase that produces ATP from ADP in the presence of a proton gradient across the membrane. The protein is A-type ATP synthase subunit E of Methanobrevibacter smithii (strain ATCC 35061 / DSM 861 / OCM 144 / PS).